The primary structure comprises 529 residues: Inosine-5'-monophosphate dehydrogenase (529 aa).

CBS domains are found at residues 129–185 (MVTD…SKQV) and 189–246 (MTKA…PLAT). NAD(+) is bound by residues Asp283 and 334 to 336 (GVG). K(+)-binding residues include Gly336 and Gly338. Residue Ser339 coordinates IMP. Cys341 contributes to the K(+) binding site. Cys341 (thioimidate intermediate) is an active-site residue. IMP is bound by residues 374–376 (DGG), 397–398 (GS), and 421–425 (YRGMG). Catalysis depends on Arg443, which acts as the Proton acceptor. Glu458 is a binding site for IMP. The K(+) site is built by Glu511, Ser512, and His513.

Belongs to the IMPDH/GMPR family. Homotetramer. K(+) is required as a cofactor.

The catalysed reaction is IMP + NAD(+) + H2O = XMP + NADH + H(+). It functions in the pathway purine metabolism; XMP biosynthesis via de novo pathway; XMP from IMP: step 1/1. Its activity is regulated as follows. Mycophenolic acid (MPA) is a non-competitive inhibitor that prevents formation of the closed enzyme conformation by binding to the same site as the amobile flap. In contrast, mizoribine monophosphate (MZP) is a competitive inhibitor that induces the closed conformation. MPA is a potent inhibitor of mammalian IMPDHs but a poor inhibitor of the bacterial enzymes. MZP is a more potent inhibitor of bacterial IMPDH. Its function is as follows. Catalyzes the conversion of inosine 5'-phosphate (IMP) to xanthosine 5'-phosphate (XMP), the first committed and rate-limiting step in the de novo synthesis of guanine nucleotides, and therefore plays an important role in the regulation of cell growth. The protein is Inosine-5'-monophosphate dehydrogenase of Mycobacterium bovis (strain ATCC BAA-935 / AF2122/97).